We begin with the raw amino-acid sequence, 1294 residues long: Leucine-rich repeat receptor protein kinase MSP1 (1294 aa).

The first 22 residues, 1-22 (MVSNSFWLFILLVSFIPISAWA), serve as a signal peptide directing secretion. LRR repeat units lie at residues 88-112 (FQSLVRLNFSGCGFSGELPEALGNL), 113-136 (QNLQYLDLSNNELTGPIPISLYNL), 138-160 (MLKEMVLDYNSLSGQLSPAIAQL), 161-184 (QHLTKLSISMNSISGSLPPDLGSL), and 186-207 (NLELLDIKMNTFNGSIPATFGN). N-linked (GlcNAc...) asparagine glycans are attached at residues Asn198, Asn207, and Asn220. LRR repeat units follow at residues 232–256 (LTNLLTLDLSSNSFEGTIPREIGQL), 258–280 (NLELLILGKNDLTGRIPQEIGSL), 282–304 (QLKLLHLEECQFTGKIPWSISGL), 305–328 (SSLTELDISDNNFDAELPSSMGEL), 330–352 (NLTQLIAKNAGLSGNMPKELGNC), 353–376 (KKLTVINLSFNALIGPIPEEFADL), 378–400 (AIVSFFVEGNKLSGRVPDWIQKW), 401–422 (KNARSIRLGQNKFSGPLPVLPL), 423–446 (QHLLSFAAESNLLSGSIPSHICQA), 447–469 (NSLHSLLLHHNNLTGTIDEAFKG), 471–493 (TNLTELNLLDNHIHGEVPGYLAE), 494–517 (LPLVTLELSQNKFAGMLPAELWES), 519–541 (TLLEISLSNNEITGPIPESIGKL), 542–565 (SVLQRLHIDNNLLEGPIPQSVGDL), 566–589 (RNLTNLSLRGNRLSGIIPLALFNC), 591–613 (KLATLDLSYNNLTGNIPSAISHL), 614–637 (TLLDSLILSSNQLSGSIPAEICVG), 649–673 (LQHHGLLDLSYNQLTGQIPTSIKNC), 675–697 (MVMVLNLQGNLLNGTIPVELGEL), 698–721 (TNLTSINLSFNEFVGPMLPWSGPL), 722–745 (VQLQGLILSNNHLDGSIPAKIGQI), 746–770 (LPKIAVLDLSSNALTGTLPQSLLCN), and 772–794 (YLNHLDVSNNHLSGHIQFSCPDG). N-linked (GlcNAc...) asparagine glycosylation is found at Asn330 and Asn359. 2 N-linked (GlcNAc...) asparagine glycosylation sites follow: Asn458 and Asn472. Asn567, Asn570, and Asn601 each carry an N-linked (GlcNAc...) asparagine glycan. Residues Asn687, Asn699, and Asn704 are each glycosylated (N-linked (GlcNAc...) asparagine). Residues Asn805, Asn821, and Asn832 are each glycosylated (N-linked (GlcNAc...) asparagine). 2 LRR repeats span residues 822 to 846 (FTQLSTLDIHNNSLTGRLPSALSDL) and 848 to 870 (SLNYLDLSSNNLYGAIPCGICNI). The helical transmembrane segment at 917–937 (ITICAFTFVIIIVLVLLAVYL) threads the bilayer. Positions 1002-1282 (FSKVHIIGDG…KGLKMTHGME (281 aa)) constitute a Protein kinase domain. Residues 1008 to 1016 (IGDGGFGTV) and Lys1030 contribute to the ATP site. The active-site Proton acceptor is the Asp1129.

It belongs to the protein kinase superfamily. Ser/Thr protein kinase family. As to quaternary structure, interacts with TDL1A. Expressed in anthers and ovules during meiosis.

It localises to the cell membrane. It carries out the reaction L-seryl-[protein] + ATP = O-phospho-L-seryl-[protein] + ADP + H(+). It catalyses the reaction L-threonyl-[protein] + ATP = O-phospho-L-threonyl-[protein] + ADP + H(+). Functionally, receptor-like kinase that plays important roles in restricting the number of cells entering into male and female sporogenesis. Involved in cell specification during anther development and initiation of anther wall formation. In Oryza sativa subsp. japonica (Rice), this protein is Leucine-rich repeat receptor protein kinase MSP1.